Here is a 372-residue protein sequence, read N- to C-terminus: NAD(P)H-quinone oxidoreductase subunit 1 (372 aa).

9 helical membrane-spanning segments follow: residues 27–47 (AIWMPLPMILMLIGATVGVLV), 65–85 (PEYIGPLGLLAPVADGLKLVF), 97–117 (WLFTLGPILVVLPVFLSYLIV), 128–148 (IGTGIFLWIALSSIQPIGLLM), 166–186 (AAQSISYEIPLALSVLAIVMM), 204–224 (ILGWNIWRQPLGFLIFWIAAL), 266–286 (VLSALLVAVLYLGGWDFPIPI), 308–328 (ALGITMTLVKAYFLVFIAILL), and 347–367 (FLLPVGLVNLLLTAALKLAFP).

It belongs to the complex I subunit 1 family. As to quaternary structure, NDH-1 is composed of at least 11 different subunits.

Its subcellular location is the cellular thylakoid membrane. The catalysed reaction is a plastoquinone + NADH + (n+1) H(+)(in) = a plastoquinol + NAD(+) + n H(+)(out). The enzyme catalyses a plastoquinone + NADPH + (n+1) H(+)(in) = a plastoquinol + NADP(+) + n H(+)(out). NDH-1 shuttles electrons from an unknown electron donor, via FMN and iron-sulfur (Fe-S) centers, to quinones in the respiratory and/or the photosynthetic chain. The immediate electron acceptor for the enzyme in this species is believed to be plastoquinone. Couples the redox reaction to proton translocation, and thus conserves the redox energy in a proton gradient. This Trichormus variabilis (strain ATCC 29413 / PCC 7937) (Anabaena variabilis) protein is NAD(P)H-quinone oxidoreductase subunit 1.